The sequence spans 138 residues: Large ribosomal subunit protein bL19 (138 aa).

It belongs to the bacterial ribosomal protein bL19 family.

This protein is located at the 30S-50S ribosomal subunit interface and may play a role in the structure and function of the aminoacyl-tRNA binding site. The sequence is that of Large ribosomal subunit protein bL19 from Rickettsia africae (strain ESF-5).